Consider the following 209-residue polypeptide: Large ribosomal subunit protein uL3 (209 aa).

The protein belongs to the universal ribosomal protein uL3 family. As to quaternary structure, part of the 50S ribosomal subunit. Forms a cluster with proteins L14 and L19.

One of the primary rRNA binding proteins, it binds directly near the 3'-end of the 23S rRNA, where it nucleates assembly of the 50S subunit. This chain is Large ribosomal subunit protein uL3, found in Clostridium tetani (strain Massachusetts / E88).